The sequence spans 644 residues: Threonine--tRNA ligase (644 aa).

The region spanning 1–61 is the TGS domain; sequence MPVITLPDGS…EKDTKLTIIT (61 aa). The segment at 242 to 535 is catalytic; the sequence is DHRRIGADLD…LIEHYEGKFP (294 aa). Cysteine 335, histidine 386, and histidine 512 together coordinate Zn(2+).

The protein belongs to the class-II aminoacyl-tRNA synthetase family. Homodimer. Zn(2+) serves as cofactor.

It is found in the cytoplasm. It catalyses the reaction tRNA(Thr) + L-threonine + ATP = L-threonyl-tRNA(Thr) + AMP + diphosphate + H(+). Catalyzes the attachment of threonine to tRNA(Thr) in a two-step reaction: L-threonine is first activated by ATP to form Thr-AMP and then transferred to the acceptor end of tRNA(Thr). Also edits incorrectly charged L-seryl-tRNA(Thr). This chain is Threonine--tRNA ligase, found in Nitrosococcus oceani (strain ATCC 19707 / BCRC 17464 / JCM 30415 / NCIMB 11848 / C-107).